The following is a 571-amino-acid chain: Calcium-dependent protein kinase 16 (571 aa).

The tract at residues 1-74 (MGLCFSSAAK…TRHTPPHGKV (74 aa)) is disordered. Residue glycine 2 is the site of N-myristoyl glycine attachment. Residue cysteine 4 is the site of S-palmitoyl cysteine attachment. Residues 63-72 (TPTRHTPPHG) are compositionally biased toward basic residues. A Protein kinase domain is found at 108 to 368 (YTIGKLLGHG…AAQALSHPWV (261 aa)). ATP is bound by residues 114 to 122 (LGHGQFGYT) and lysine 137. The active-site Proton acceptor is the aspartate 234. Position 274 is a phosphoserine (serine 274). Positions 374–404 (ASEIPIDISVLNNMRQFVKFSRLKQFALRAL) are autoinhibitory domain. EF-hand domains lie at 411 to 446 (EELA…DHPW), 448 to 483 (LKDA…VNQL), 490 to 525 (KWQQ…KGSI), and 528 to 555 (LLEE…ASIK). 16 residues coordinate Ca(2+): aspartate 424, aspartate 426, asparagine 428, glutamate 435, aspartate 461, asparagine 463, aspartate 465, glutamate 472, aspartate 503, aspartate 505, aspartate 507, glutamate 514, aspartate 533, aspartate 535, aspartate 537, and lysine 539. Serine 541 is subject to Phosphoserine. Residue glutamate 544 coordinates Ca(2+).

This sequence belongs to the protein kinase superfamily. Ser/Thr protein kinase family. CDPK subfamily.

The protein localises to the cell membrane. The protein resides in the nucleus. The catalysed reaction is L-seryl-[protein] + ATP = O-phospho-L-seryl-[protein] + ADP + H(+). The enzyme catalyses L-threonyl-[protein] + ATP = O-phospho-L-threonyl-[protein] + ADP + H(+). With respect to regulation, activated by calcium. Autophosphorylation may play an important role in the regulation of the kinase activity. Functionally, may play a role in signal transduction pathways that involve calcium as a second messenger. The chain is Calcium-dependent protein kinase 16 (CPK16) from Arabidopsis thaliana (Mouse-ear cress).